The sequence spans 197 residues: Chitin synthase 3 (197 aa).

It belongs to the chitin synthase family. Class III subfamily.

Its subcellular location is the cell membrane. The catalysed reaction is [(1-&gt;4)-N-acetyl-beta-D-glucosaminyl](n) + UDP-N-acetyl-alpha-D-glucosamine = [(1-&gt;4)-N-acetyl-beta-D-glucosaminyl](n+1) + UDP + H(+). Functionally, polymerizes chitin, a structural polymer of the cell wall and septum, by transferring the sugar moiety of UDP-GlcNAc to the non-reducing end of the growing chitin polymer. This chain is Chitin synthase 3 (CHS3), found in Exophiala jeanselmei (Dematiaceous fungus).